A 383-amino-acid polypeptide reads, in one-letter code: Chaperone protein DnaJ (383 aa).

One can recognise a J domain in the interval 4–68 (DLYETLNVSR…DQRARYDRFG (65 aa)). The CR-type zinc-finger motif lies at 139–221 (GGEKEITINH…CSGRGRNQKQ (83 aa)). Zn(2+)-binding residues include Cys152, Cys155, Cys169, Cys172, Cys195, Cys198, Cys209, and Cys212. CXXCXGXG motif repeat units follow at residues 152–159 (CETCRGSG), 169–176 (CRNCGGQG), 195–202 (CPNCQGTG), and 209–216 (CPTCSGRG).

This sequence belongs to the DnaJ family. As to quaternary structure, homodimer. Zn(2+) is required as a cofactor.

The protein localises to the cytoplasm. Functionally, participates actively in the response to hyperosmotic and heat shock by preventing the aggregation of stress-denatured proteins and by disaggregating proteins, also in an autonomous, DnaK-independent fashion. Unfolded proteins bind initially to DnaJ; upon interaction with the DnaJ-bound protein, DnaK hydrolyzes its bound ATP, resulting in the formation of a stable complex. GrpE releases ADP from DnaK; ATP binding to DnaK triggers the release of the substrate protein, thus completing the reaction cycle. Several rounds of ATP-dependent interactions between DnaJ, DnaK and GrpE are required for fully efficient folding. Also involved, together with DnaK and GrpE, in the DNA replication of plasmids through activation of initiation proteins. In Gloeobacter violaceus (strain ATCC 29082 / PCC 7421), this protein is Chaperone protein DnaJ.